A 76-amino-acid chain; its full sequence is MLSSEKIARINELAKKAKIEGLTAEEKQEQIQLRTEYIAAFRASMIETLHAVKVIDPNGNDVTPQKLKDSKKKRLH.

The interval 56–76 (DPNGNDVTPQKLKDSKKKRLH) is disordered.

The protein belongs to the UPF0291 family.

The protein localises to the cytoplasm. In Anoxybacillus flavithermus (strain DSM 21510 / WK1), this protein is UPF0291 protein Aflv_1503.